Reading from the N-terminus, the 76-residue chain is DNA-directed RNA polymerase subunit epsilon (76 aa).

Belongs to the RNA polymerase subunit epsilon family. As to quaternary structure, RNAP is composed of a core of 2 alpha, a beta and a beta' subunit. The core is associated with a delta subunit, and at least one of epsilon or omega. When a sigma factor is associated with the core the holoenzyme is formed, which can initiate transcription.

It catalyses the reaction RNA(n) + a ribonucleoside 5'-triphosphate = RNA(n+1) + diphosphate. Its function is as follows. A non-essential component of RNA polymerase (RNAP). In Streptococcus equi subsp. zooepidemicus (strain H70), this protein is DNA-directed RNA polymerase subunit epsilon.